The primary structure comprises 417 residues: Dibenzothiophene monooxygenase (417 aa).

FMN is bound by residues Tyr96, 129 to 134 (NASSEN), 159 to 163 (KHFCS), Arg282, 369 to 370 (AR), and His391. Residues 131 to 142 (SSENNSHVLDWK) form a lid loop region.

Belongs to the DszC flavin monooxygenase family. Homotetramer. Homodimer. It depends on FAD as a cofactor. NADH serves as cofactor.

It localises to the cytoplasm. The enzyme catalyses dibenzothiophene + 2 FMNH2 + 2 O2 = dibenzothiophene 5,5-dioxide + 2 FMN + 2 H2O + 2 H(+). It carries out the reaction dibenzothiophene + FMNH2 + O2 = dibenzothiophene 5-oxide + FMN + H2O + H(+). It catalyses the reaction dibenzothiophene 5-oxide + FMNH2 + O2 = dibenzothiophene 5,5-dioxide + FMN + H2O + H(+). It participates in sulfur metabolism; dibenzothiophene degradation. Functionally, catalyzes the first step of the '4S' desulfurization pathway that removes covalently bound sulfur from dibenzothiophene (DBT) without breaking carbon-carbon bonds. Sulfur dioxygenase which converts DBT to DBT-sulfone (DBTO2 or DBT 5,5-dioxide) in a stepwise manner. In DBTO (dibenzothiophene-5-oxide) was reported not to be a substrate, in it is reported to be a substrate. Can also use benzyl sulfide and benzyl sulfoxide as substrates, although benzyl sulfoxide is a poor substrate. The pathway substrate specificity has been augmented using mutagenesis, however no mutations allowed use of alkylated thiophenes. This Rhodococcus qingshengii protein is Dibenzothiophene monooxygenase.